A 407-amino-acid polypeptide reads, in one-letter code: Probable endo-beta-1,4-glucanase celB (407 aa).

An N-terminal signal peptide occupies residues 1–18; it reads MALTLAATALVLLPLVTA. The N-linked (GlcNAc...) asparagine glycan is linked to Asn-136. Glu-216 functions as the Nucleophile in the catalytic mechanism. Glu-221 serves as the catalytic Proton donor.

This sequence belongs to the glycosyl hydrolase 7 (cellulase C) family.

It localises to the secreted. It catalyses the reaction Endohydrolysis of (1-&gt;4)-beta-D-glucosidic linkages in cellulose, lichenin and cereal beta-D-glucans.. Its function is as follows. Has endoglucanase activity on substrates containing beta-1,4 glycosidic bonds, like in carboxymethylcellulose (CMC), hydroxyethylcellulose (HEC) and beta-glucan. Involved in the degradation of complex natural cellulosic substrates. The protein is Probable endo-beta-1,4-glucanase celB (celB) of Neosartorya fischeri (strain ATCC 1020 / DSM 3700 / CBS 544.65 / FGSC A1164 / JCM 1740 / NRRL 181 / WB 181) (Aspergillus fischerianus).